The sequence spans 369 residues: Chorismate synthase (369 aa).

Residues arginine 48 and arginine 54 each coordinate NADP(+). FMN-binding positions include 125–127 (RSS), 238–239 (NA), glycine 278, 293–297 (KPTSS), and arginine 319.

Belongs to the chorismate synthase family. As to quaternary structure, homotetramer. FMNH2 serves as cofactor.

It catalyses the reaction 5-O-(1-carboxyvinyl)-3-phosphoshikimate = chorismate + phosphate. The protein operates within metabolic intermediate biosynthesis; chorismate biosynthesis; chorismate from D-erythrose 4-phosphate and phosphoenolpyruvate: step 7/7. Its function is as follows. Catalyzes the anti-1,4-elimination of the C-3 phosphate and the C-6 proR hydrogen from 5-enolpyruvylshikimate-3-phosphate (EPSP) to yield chorismate, which is the branch point compound that serves as the starting substrate for the three terminal pathways of aromatic amino acid biosynthesis. This reaction introduces a second double bond into the aromatic ring system. The protein is Chorismate synthase of Burkholderia thailandensis (strain ATCC 700388 / DSM 13276 / CCUG 48851 / CIP 106301 / E264).